Reading from the N-terminus, the 459-residue chain is uncharacterized protein (459 aa).

One can recognise a TRAM domain in the interval 9–67; sequence KLEVGQTFPVTIKRLGINGEGVGYFKRQVVFIPGALPGEEVVAETTKIQRGFAEAKVKK. The [4Fe-4S] cluster site is built by C80, C86, C89, and C168. The S-adenosyl-L-methionine site is built by Q292, Y321, D342, and D390. Catalysis depends on C417, which acts as the Nucleophile.

Belongs to the class I-like SAM-binding methyltransferase superfamily. RNA M5U methyltransferase family.

This is an uncharacterized protein from Bacillus cereus (strain ATCC 10987 / NRS 248).